The following is a 124-amino-acid chain: Fluoride-specific ion channel FluC 1 (124 aa).

4 consecutive transmembrane segments (helical) span residues 4–24 (VLIGVAGAAGAVARLLVGAWI), 36–56 (GTFAVNIAGSLLLGLLTGLVV), 67–87 (VVLGAGFLGAFTTFSTWLLDL), and 103–123 (AALSTGLGLLAAWLGLALGWG). Glycine 75 and threonine 78 together coordinate Na(+).

The protein belongs to the fluoride channel Fluc/FEX (TC 1.A.43) family.

Its subcellular location is the cell membrane. The catalysed reaction is fluoride(in) = fluoride(out). Its activity is regulated as follows. Na(+) is not transported, but it plays an essential structural role and its presence is essential for fluoride channel function. Its function is as follows. Fluoride-specific ion channel. Important for reducing fluoride concentration in the cell, thus reducing its toxicity. The polypeptide is Fluoride-specific ion channel FluC 1 (Symbiobacterium thermophilum (strain DSM 24528 / JCM 14929 / IAM 14863 / T)).